We begin with the raw amino-acid sequence, 304 residues long: N-acetylmuramic acid 6-phosphate etherase 1 (304 aa).

Positions 1–10 (MENSHLGSLT) are enriched in polar residues. Residues 1-20 (MENSHLGSLTTERRNERSKR) are disordered. The 164-residue stretch at 58–221 (AVGSLKKGGR…STAAMIKMGK (164 aa)) folds into the SIS domain. Glu86 acts as the Proton donor in catalysis. Glu117 is a catalytic residue.

This sequence belongs to the GCKR-like family. MurNAc-6-P etherase subfamily. In terms of assembly, homodimer.

It catalyses the reaction N-acetyl-D-muramate 6-phosphate + H2O = N-acetyl-D-glucosamine 6-phosphate + (R)-lactate. Its pathway is amino-sugar metabolism; N-acetylmuramate degradation. Specifically catalyzes the cleavage of the D-lactyl ether substituent of MurNAc 6-phosphate, producing GlcNAc 6-phosphate and D-lactate. In Bacillus licheniformis (strain ATCC 14580 / DSM 13 / JCM 2505 / CCUG 7422 / NBRC 12200 / NCIMB 9375 / NCTC 10341 / NRRL NRS-1264 / Gibson 46), this protein is N-acetylmuramic acid 6-phosphate etherase 1.